Here is a 182-residue protein sequence, read N- to C-terminus: Putative manganese efflux pump MntP (182 aa).

The next 6 membrane-spanning stretches (helical) occupy residues 6–26 (LIPLIIMAFALGMDAFSVSLG), 37–57 (ILYIGMTIGIFHIIMPFIGMV), 71–91 (HFAGAILLIGLGFYIVYSTIL), 101–121 (IGISLFVFAFGVSIDSFSVGL), 131–151 (IITILLFGFVSMLLAWIGLLI), and 162–182 (YGEIVGGIILVGFGLYILFPI).

This sequence belongs to the MntP (TC 9.B.29) family.

The protein localises to the cell membrane. Functionally, probably functions as a manganese efflux pump. The sequence is that of Putative manganese efflux pump MntP from Bacillus cereus (strain B4264).